A 261-amino-acid polypeptide reads, in one-letter code: Neurovirulence factor ICP34.5 (261 aa).

Residues 1-17 show a composition bias toward basic residues; sequence MSRRRGPRRRGPRRRPR. A required for nucleolar localization region spans residues 1 to 19; it reads MSRRRGPRRRGPRRRPRPG. 3 disordered regions span residues 1 to 59, 75 to 135, and 145 to 164; these read MSRR…SAPA, DSDD…LALR, and RLSL…APRG. 4 repeats span residues 3–7, 8–12, 16–23, and 24–31; these read RRRGP and PRPGAPAV. Residues 3–12 form a 2 X 5 AA tandem repeats of R-R-R-G-P region; sequence RRRGPRRRGP. The 2 X 8 AA tandem repeats of P-R-P-G-A-P-A-V stretch occupies residues 16 to 31; the sequence is PRPGAPAVPRPGAPAV. Residues 18-32 show a composition bias toward pro residues; that stretch reads PGAPAVPRPGAPAVP. The span at 75-88 shows a compositional bias: acidic residues; it reads DSDDADYAGNDDAE. Positions 101–111 are enriched in low complexity; it reads APEAPHAAPAA. A Nuclear export signal motif is present at residues 128-137; the sequence is LPPHLALRLR. The segment at 163-176 is binding to PP1CA; that stretch reads RGKVCFSPRVQVRH. The segment at 163 to 176 is interaction with host PPP1CA; that stretch reads RGKVCFSPRVQVRH. The important for interferon resistance stretch occupies residues 178 to 261; that stretch reads VAWETAARLA…AAAGPGRRAV (84 aa). The Bipartite nuclear localization signal signature appears at 188–206; it reads RRGSWARERADRDRFRRRV. The tract at residues 206–221 is interaction with host EIF2S1/EIF-2ALPHA; it reads VAAAEAVIGPCLEPEA. Positions 223-261 are disordered; that stretch reads ARARARARAHEDGGPAEEEEAAAAARGSSAAAGPGRRAV. Residues 244–261 show a composition bias toward low complexity; the sequence is AAAARGSSAAAGPGRRAV.

This sequence belongs to the PPP1R15 family. Interacts with host PPP1CA to form a high-molecular-weight complex that dephosphorylates EIF2S1/eIF-2alpha. Interacts with host EIF2S1/eIF-2alpha; this interaction is crucial for the specific dephosphorylation of EIF2S1/eIF-2alpha by PPP1CA.

It is found in the host cytoplasm. Its subcellular location is the host nucleus. The protein resides in the host nucleolus. It localises to the virion. Functionally, plays essential roles in viral nuclear egress to mediate capsid transit across the nuclear membrane and also in the inhibition of host immune response and integrated stress response (ISR). Facilitates nuclear egress cooperatively with host C1QBP and protein kinase C/PKC to induce lamin A/C phosphorylation and subsequent reorganization. In turn, lamina disassembles and nuclear egress occurs. Recruits the serine/threonine-protein phosphatase PPP1CA/PP1-alpha to dephosphorylate the translation initiation factor EIF2S1/eIF-2alpha, thereby couteracting the host shutoff of protein synthesis involving double-stranded RNA-dependent protein kinase EIF2AK2/PKR. Also down-modulates the host MHC class II proteins cell surface expression. Acts as a neurovirulence factor that has a profound effect on the growth of the virus in central nervous system tissue, probably through its ability to maintain an environment favorable for viral replication. This chain is Neurovirulence factor ICP34.5 (RL1), found in Human herpesvirus 2 (strain HG52) (HHV-2).